The sequence spans 189 residues: Thioredoxin-like protein CITRX, chloroplastic (189 aa).

Residues 1–36 constitute a chloroplast transit peptide; the sequence is MAMAAAASLLPACAAPTLPGRAFRPRRNSTPTASLS. The Thioredoxin domain maps to 72-189; the sequence is GSGKYIAPDY…MIRNIIDNEL (118 aa). Residues cysteine 112 and cysteine 115 each act as nucleophile in the active site. Cysteines 112 and 115 form a disulfide.

This sequence belongs to the thioredoxin family. Plant CITRX-type subfamily.

The protein resides in the plastid. The protein localises to the chloroplast. Probable thiol-disulfide oxidoreductase that may play a role in proper chloroplast development. In Oryza sativa subsp. indica (Rice), this protein is Thioredoxin-like protein CITRX, chloroplastic.